Consider the following 346-residue polypeptide: UPF0324 membrane protein FN0533 (346 aa).

The next 10 membrane-spanning stretches (helical) occupy residues 5 to 22 (LYGIILCFLLALPAWKLG), 27 to 49 (LVGGPVFGIIIGIVIAILLKNRA), 62 to 81 (VLQYAVILLGFGLNLQTIIS), 86 to 108 (SLPIIVSTISTSLIIAYILAKLI), 115 to 137 (VILIGVGSSICGGSAIAATAPVI), 147 to 169 (AISVIFLFNVIAALIFPTLGDIL), 216 to 233 (LTRTLAIIPITLFLAVYN), 248 to 270 (IFPMFIVYFILASIITTVCNYFI), 283 to 305 (INNVFSFFKHLSKFFIIMAMVAI), and 315 to 337 (ILSGAKPLTLGFCCWFAISLVSI).

Belongs to the UPF0324 family.

Its subcellular location is the cell membrane. The protein is UPF0324 membrane protein FN0533 of Fusobacterium nucleatum subsp. nucleatum (strain ATCC 25586 / DSM 15643 / BCRC 10681 / CIP 101130 / JCM 8532 / KCTC 2640 / LMG 13131 / VPI 4355).